A 673-amino-acid chain; its full sequence is Ion-translocating oxidoreductase complex subunit C (673 aa).

4Fe-4S ferredoxin-type domains are found at residues 368–397 (MGAPQEEKSCIRCSACADACPADLLPQQLY) and 407–436 (KATAHHIADCIECGACAWVCPSNIPLVQYF). Positions 377, 380, 383, 387, 416, 419, 422, and 426 each coordinate [4Fe-4S] cluster. Disordered stretches follow at residues 534–553 (QARAKQAAHPVADSAISGGA) and 563–653 (IARA…AAVA).

It belongs to the 4Fe4S bacterial-type ferredoxin family. RnfC subfamily. The complex is composed of six subunits: RsxA, RsxB, RsxC, RsxD, RsxE and RsxG. [4Fe-4S] cluster is required as a cofactor.

It localises to the cell inner membrane. Functionally, part of a membrane-bound complex that couples electron transfer with translocation of ions across the membrane. Required to maintain the reduced state of SoxR. This chain is Ion-translocating oxidoreductase complex subunit C, found in Salmonella gallinarum (strain 287/91 / NCTC 13346).